A 291-amino-acid polypeptide reads, in one-letter code: Ribosomal RNA small subunit methyltransferase I (291 aa).

The protein belongs to the methyltransferase superfamily. RsmI family.

The protein localises to the cytoplasm. It catalyses the reaction cytidine(1402) in 16S rRNA + S-adenosyl-L-methionine = 2'-O-methylcytidine(1402) in 16S rRNA + S-adenosyl-L-homocysteine + H(+). In terms of biological role, catalyzes the 2'-O-methylation of the ribose of cytidine 1402 (C1402) in 16S rRNA. The chain is Ribosomal RNA small subunit methyltransferase I from Neisseria meningitidis serogroup A / serotype 4A (strain DSM 15465 / Z2491).